A 147-amino-acid chain; its full sequence is Ubiquitin-conjugating enzyme E2 D4 (147 aa).

In terms of domain architecture, UBC core spans 1-147; the sequence is MALKRIQKEL…AREWTQKYAM (147 aa). The active-site Glycyl thioester intermediate is C85.

The protein belongs to the ubiquitin-conjugating enzyme family. In terms of assembly, interacts with map3k10/mlk2. As to expression, at embryonic stages 28 to 35, expressed in the somites, eye primordia, otic vesicle and branchial arches. By stage 35, also weakly expressed in the pronephros.

The catalysed reaction is S-ubiquitinyl-[E1 ubiquitin-activating enzyme]-L-cysteine + [E2 ubiquitin-conjugating enzyme]-L-cysteine = [E1 ubiquitin-activating enzyme]-L-cysteine + S-ubiquitinyl-[E2 ubiquitin-conjugating enzyme]-L-cysteine.. It participates in protein modification; protein ubiquitination. Its function is as follows. Catalyzes the covalent attachment of ubiquitin to other proteins. Regulates pronephros development, possibly by promoting ubiquitination and thus inactivation or degradation of map3k10/mlk2. This Xenopus laevis (African clawed frog) protein is Ubiquitin-conjugating enzyme E2 D4 (ube2d4).